Reading from the N-terminus, the 309-residue chain is Homoserine O-succinyltransferase (309 aa).

The Acyl-thioester intermediate role is filled by Cys-142. Residues Lys-163 and Ser-192 each coordinate substrate. Residue His-235 is the Proton acceptor of the active site. Glu-237 is a catalytic residue. Arg-249 is a substrate binding site.

It belongs to the MetA family.

The protein resides in the cytoplasm. It carries out the reaction L-homoserine + succinyl-CoA = O-succinyl-L-homoserine + CoA. It participates in amino-acid biosynthesis; L-methionine biosynthesis via de novo pathway; O-succinyl-L-homoserine from L-homoserine: step 1/1. Functionally, transfers a succinyl group from succinyl-CoA to L-homoserine, forming succinyl-L-homoserine. This chain is Homoserine O-succinyltransferase, found in Erwinia tasmaniensis (strain DSM 17950 / CFBP 7177 / CIP 109463 / NCPPB 4357 / Et1/99).